The chain runs to 735 residues: 2-5A-dependent ribonuclease (735 aa).

Residues Met1–Thr21 form a disordered region. 9 ANK repeats span residues Glu24–Ala53, Trp58–Arg87, Asn91–Glu120, Asn124–Leu153, Gly167–Ala197, Met201–Val234, Arg238–Ala268, Glu272–Asp301, and Leu303–Thr328. Residues Asp26–Ala51 are binding to TMEV Leader protein. 2-5A binding (P-loop) stretches follow at residues Gly229–Pro242 and Gly253–Thr275. The region spanning Ile364 to Phe584 is the Protein kinase domain. The segment at Cys401–Cys436 adopts a C6-type zinc-finger fold. The 136-residue stretch at Trp587 to Leu722 folds into the KEN domain. A disordered region spans residues His714–Ser735.

Belongs to the protein kinase superfamily. (Microbial infection) Interacts (via N-terminus) with TMEV leader protein; this interaction prevents RNASEL activation by its substrate 2'-5' oligoadenylates. As to quaternary structure, monomer (inactive form) or homodimer. Interacts with ABCE1; this interaction inhibits the RNASEL. Mn(2+) serves as cofactor. Requires Mg(2+) as cofactor. As to expression, expressed in spleen, thymus, lung, testis, kidney, liver and heart.

It is found in the cytoplasm. The protein resides in the mitochondrion. With respect to regulation, after binding to 2-5A (5'-phosphorylated 2',5'-linked oligoadenylates) the homodimerization and subsequent activation occurs. Inhibited by RNASEL inhibitor ABCE1/RLI, a cytoplasmic member of the ATP-binding cassette (ABC) transporter family. Its function is as follows. Endoribonuclease that functions in the interferon (IFN) antiviral response. In INF treated and virus infected cells, RNASEL probably mediates its antiviral effects through a combination of direct cleavage of single-stranded viral RNAs, inhibition of protein synthesis through the degradation of rRNA, induction of apoptosis, and induction of other antiviral genes. RNASEL mediated apoptosis is the result of a JNK-dependent stress-response pathway leading to cytochrome c release from mitochondria and caspase-dependent apoptosis. Therefore, activation of RNASEL could lead to elimination of virus infected cells under some circumstances. In the crosstalk between autophagy and apoptosis proposed to induce autophagy as an early stress response to small double-stranded RNA and at later stages of prolonged stress to activate caspase-dependent proteolytic cleavage of BECN1 to terminate autophagy and promote apoptosis. Might play a central role in the regulation of mRNA turnover. Cleaves 3' of UpNp dimers, with preference for UU and UA sequences, to sets of discrete products ranging from between 4 and 22 nucleotides in length. The chain is 2-5A-dependent ribonuclease (Rnasel) from Mus musculus (Mouse).